Here is a 511-residue protein sequence, read N- to C-terminus: Exodeoxyribonuclease 7 large subunit (511 aa).

This sequence belongs to the XseA family. As to quaternary structure, heterooligomer composed of large and small subunits.

The protein resides in the cytoplasm. The catalysed reaction is Exonucleolytic cleavage in either 5'- to 3'- or 3'- to 5'-direction to yield nucleoside 5'-phosphates.. Its function is as follows. Bidirectionally degrades single-stranded DNA into large acid-insoluble oligonucleotides, which are then degraded further into small acid-soluble oligonucleotides. In Brucella melitensis biotype 1 (strain ATCC 23456 / CCUG 17765 / NCTC 10094 / 16M), this protein is Exodeoxyribonuclease 7 large subunit.